Consider the following 136-residue polypeptide: Large ribosomal subunit protein uL16 (136 aa).

Belongs to the universal ribosomal protein uL16 family. As to quaternary structure, part of the 50S ribosomal subunit.

Its function is as follows. Binds 23S rRNA and is also seen to make contacts with the A and possibly P site tRNAs. The sequence is that of Large ribosomal subunit protein uL16 from Rickettsia bellii (strain OSU 85-389).